A 220-amino-acid polypeptide reads, in one-letter code: MTSGEVKTSLKNAYSSAKRLSPKMEEEGEEEDYCTPGAFELERLFWKGSPQYTHVNEVWPKLYIGDEATALDRYRLQKAGFTHVLNAAHGRWNVDTGPDYYRDMDIQYHGVEADDLPTFDLSVFFYPAAAFIDRALSDDHSKILVHCVMGRSRSATLVLAYLMIHKDMTLVDAIQQVAKNRCVLPNRGFLKQLRELDKQLVQQRRRSQRQDGEEEDGREL.

Residues 1–15 show a composition bias toward polar residues; it reads MTSGEVKTSLKNAYS. Positions 1–29 are disordered; sequence MTSGEVKTSLKNAYSSAKRLSPKMEEEGE. Residues 54-202 enclose the Tyrosine-protein phosphatase domain; that stretch reads HVNEVWPKLY…LRELDKQLVQ (149 aa). Substrate is bound at residue 146–153; it reads HCVMGRSR. Cysteine 147 functions as the Phosphocysteine intermediate in the catalytic mechanism.

It belongs to the protein-tyrosine phosphatase family. Non-receptor class dual specificity subfamily. In terms of assembly, homodimer. Interacts with PRKAA2.

It localises to the cytoplasm. It is found in the nucleus. It catalyses the reaction O-phospho-L-tyrosyl-[protein] + H2O = L-tyrosyl-[protein] + phosphate. The enzyme catalyses O-phospho-L-seryl-[protein] + H2O = L-seryl-[protein] + phosphate. It carries out the reaction O-phospho-L-threonyl-[protein] + H2O = L-threonyl-[protein] + phosphate. Its function is as follows. Dual specificity phosphatase able to dephosphorylate phosphotyrosine, phosphoserine and phosphothreonine residues within the same substrate, with a preference for phosphotyrosine as a substrate. Involved in the modulation of intracellular signaling cascades. In skeletal muscle regulates systemic glucose homeostasis by activating, AMPK, an energy sensor protein kinase. Affects MAP kinase signaling though modulation of the MAPK1/2 cascade in skeletal muscle promoting muscle cell differentiation, development and atrophy. This Homo sapiens (Human) protein is Dual specificity phosphatase 29.